Here is a 171-residue protein sequence, read N- to C-terminus: MKTIKKEFVKKTSPYEEKVVKIKRITKVVKGGRRFRFSALVVVGNKKDQIGFATAKAQEIVDAIKKAVEKAKKQLIRIPIVGTTIPHDTIGHFGASKFLLRPASKGTGIVAGGAAARTVLELVGISDVLTKTFGSRTSINVIRAVMDGLKNLRTKEEVAKLRGLTLAKNEQ.

The 64-residue stretch at 15 to 78 folds into the S5 DRBM domain; that stretch reads YEEKVVKIKR…EKAKKQLIRI (64 aa).

It belongs to the universal ribosomal protein uS5 family. In terms of assembly, part of the 30S ribosomal subunit. Contacts proteins S4 and S8.

With S4 and S12 plays an important role in translational accuracy. Its function is as follows. Located at the back of the 30S subunit body where it stabilizes the conformation of the head with respect to the body. This chain is Small ribosomal subunit protein uS5, found in Phytoplasma australiense.